Consider the following 318-residue polypeptide: NADH-ubiquinone oxidoreductase chain 1 (318 aa).

The next 8 membrane-spanning stretches (helical) occupy residues 3–23 (TMNL…LTLV), 69–89 (ILYI…WTPL), 98–118 (FNLG…SILW), 135–155 (AVAQ…SILL), 171–191 (HLWL…STLA), 217–237 (AGPF…MNAL), 253–273 (ELFT…FLWI), and 294–314 (LPLT…ISSI).

The protein belongs to the complex I subunit 1 family. Core subunit of respiratory chain NADH dehydrogenase (Complex I) which is composed of 45 different subunits.

The protein localises to the mitochondrion inner membrane. It catalyses the reaction a ubiquinone + NADH + 5 H(+)(in) = a ubiquinol + NAD(+) + 4 H(+)(out). Core subunit of the mitochondrial membrane respiratory chain NADH dehydrogenase (Complex I) which catalyzes electron transfer from NADH through the respiratory chain, using ubiquinone as an electron acceptor. Essential for the catalytic activity and assembly of complex I. The chain is NADH-ubiquinone oxidoreductase chain 1 (MT-ND1) from Papio hamadryas (Hamadryas baboon).